The primary structure comprises 475 residues: Bifunctional protein HldE (475 aa).

Positions 1–318 (MKITLPEFGK…ANALYTEQET (318 aa)) are ribokinase. Position 195 to 198 (195 to 198 (NMSE)) interacts with ATP. Asp264 is an active-site residue. Positions 344–475 (MTNGCFDILH…DIIKTIRERG (132 aa)) are cytidylyltransferase.

In the N-terminal section; belongs to the carbohydrate kinase PfkB family. It in the C-terminal section; belongs to the cytidylyltransferase family. Homodimer.

It carries out the reaction D-glycero-beta-D-manno-heptose 7-phosphate + ATP = D-glycero-beta-D-manno-heptose 1,7-bisphosphate + ADP + H(+). It catalyses the reaction D-glycero-beta-D-manno-heptose 1-phosphate + ATP + H(+) = ADP-D-glycero-beta-D-manno-heptose + diphosphate. The protein operates within nucleotide-sugar biosynthesis; ADP-L-glycero-beta-D-manno-heptose biosynthesis; ADP-L-glycero-beta-D-manno-heptose from D-glycero-beta-D-manno-heptose 7-phosphate: step 1/4. Its pathway is nucleotide-sugar biosynthesis; ADP-L-glycero-beta-D-manno-heptose biosynthesis; ADP-L-glycero-beta-D-manno-heptose from D-glycero-beta-D-manno-heptose 7-phosphate: step 3/4. Catalyzes the phosphorylation of D-glycero-D-manno-heptose 7-phosphate at the C-1 position to selectively form D-glycero-beta-D-manno-heptose-1,7-bisphosphate. Its function is as follows. Catalyzes the ADP transfer from ATP to D-glycero-beta-D-manno-heptose 1-phosphate, yielding ADP-D-glycero-beta-D-manno-heptose. This is Bifunctional protein HldE from Aeromonas salmonicida (strain A449).